Consider the following 718-residue polypeptide: Sodium/myo-inositol cotransporter (718 aa).

Over 1 to 9 (MRAVLEAAD) the chain is Extracellular. The chain crosses the membrane as a helical span at residues 10 to 29 (IAVVALYFILVMCIGFFAMW). At 30-38 (KSNRSTVSG) the chain is on the cytoplasmic side. The chain crosses the membrane as a helical span at residues 39 to 57 (YFLAGRSMTWVAIGASLFV). Residues 58 to 86 (SNIGSEHFIGLAGSGAASGFAVGAWEFNA) are Extracellular-facing. Residues 87–110 (LLLLQLLGWVFIPIYIRSGVYTMP) traverse the membrane as a helical segment. Over 111-123 (EYLSKRFGGHRIQ) the chain is Cytoplasmic. The chain crosses the membrane as a helical span at residues 124-144 (VYFAALSLLLYIFTKLSVDLY). Residues 145 to 157 (SGALFIQESLGWN) lie on the Extracellular side of the membrane. Residues 158 to 183 (LYVSVILLIGMTALLTVTGGLVAVIY) form a helical membrane-spanning segment. Residues 184 to 186 (TDT) are Cytoplasmic-facing. The chain crosses the membrane as a helical span at residues 187–205 (LQALLMIIGALTLMVISMV). Residues 206–303 (KIGGFEEVKR…HAKGSTLMAG (98 aa)) lie on the Extracellular side of the membrane. N232 carries N-linked (GlcNAc...) asparagine glycosylation. The chain crosses the membrane as a helical span at residues 304 to 324 (FLKLLPMFIIVVPGMISRIVF). The Cytoplasmic segment spans residues 325-353 (ADEIACINPEHCMQVCGSRAGCSNIAYPR). Residues 354–376 (LVMTLVPVGLRGLMMAVMIAALM) form a helical membrane-spanning segment. The Extracellular portion of the chain corresponds to 377–406 (SDLDSIFNSASTIFTLDVYKLIRKSASSRE). A helical membrane pass occupies residues 407–430 (LMIVGRIFVAFMVVISIAWVPIIV). At 431–443 (EMQGGQMYLYIQE) the chain is on the cytoplasmic side. Residues 444–462 (VADYLTPPVAALFLLAIFW) traverse the membrane as a helical segment. Over 463-510 (KRCNEQGAFYGGMAGFVLGAVRLILAFTYRAPECDQPDNRPGFIKDIH) the chain is Extracellular. A helical membrane pass occupies residues 511–532 (YMYVATALFWITGLITVIVSLL). At 533–695 (TPPPTKDQIR…QMLEETPQVK (163 aa)) the chain is on the cytoplasmic side. S594 and S632 each carry phosphoserine. A helical membrane pass occupies residues 696–716 (VILNIGLFAVCSLGIFMFVYF). Topologically, residues 717 to 718 (SL) are extracellular.

The protein belongs to the sodium:solute symporter (SSF) (TC 2.A.21) family. As to quaternary structure, interacts with KCNQ2 (via the pore module). Interacts with KCNQ1; this interaction is direct. Forms coregulatory complexes with ion channels KCNQ2-KCNQ3 and KCNQ1-KCNE2. Highly expressed in kidney, placenta, and brain and at a lesser extent in thymus, lung, bladder, and testes. Expressed in the choroid plexus epithelium (at protein level).

It is found in the apical cell membrane. The protein resides in the basolateral cell membrane. It catalyses the reaction myo-inositol(out) + 2 Na(+)(out) = myo-inositol(in) + 2 Na(+)(in). It carries out the reaction scyllo-inositol(out) + 2 Na(+)(out) = scyllo-inositol(in) + 2 Na(+)(in). Electrogenic Na(+)-coupled sugar symporter that actively transports myo-inositol and its stereoisomer scyllo-inositol across the plasma membrane, with a Na(+) to sugar coupling ratio of 2:1. Maintains myo-inositol concentration gradient that defines cell volume and fluid balance during osmotic stress, in particular in the fetoplacental unit and central nervous system. Forms coregulatory complexes with voltage-gated K(+) ion channels, allosterically altering ion selectivity, voltage dependence and gating kinetics of the channel. In turn, K(+) efflux through the channel forms a local electrical gradient that modulates electrogenic Na(+)-coupled myo-inositol influx through the transporter. Associates with KCNQ1-KCNE2 channel in the apical membrane of choroid plexus epithelium and regulates the myo-inositol gradient between blood and cerebrospinal fluid with an impact on neuron excitability. Associates with KCNQ2-KCNQ3 channel altering ion selectivity, increasing Na(+) and Cs(+) permeation relative to K(+) permeation. Provides myo-inositol precursor for biosynthesis of phosphoinositides such as PI(4,5)P2, thus indirectly affecting the activity of phosphoinositide-dependent ion channels and Ca(2+) signaling upon osmotic stress. Functionally, (Microbial infection) Functions as a retroviral receptor for M813 murine leukemia virus (MuLV) entry. This chain is Sodium/myo-inositol cotransporter (Slc5a3), found in Mus musculus (Mouse).